Reading from the N-terminus, the 525-residue chain is ATP synthase subunit alpha (525 aa).

Gly-171–Ser-178 lines the ATP pocket.

The protein belongs to the ATPase alpha/beta chains family. In terms of assembly, F-type ATPases have 2 components, CF(1) - the catalytic core - and CF(0) - the membrane proton channel. CF(1) has five subunits: alpha(3), beta(3), gamma(1), delta(1), epsilon(1). CF(0) has three main subunits: a(1), b(2) and c(9-12). The alpha and beta chains form an alternating ring which encloses part of the gamma chain. CF(1) is attached to CF(0) by a central stalk formed by the gamma and epsilon chains, while a peripheral stalk is formed by the delta and b chains.

It localises to the cell inner membrane. It catalyses the reaction ATP + H2O + 4 H(+)(in) = ADP + phosphate + 5 H(+)(out). Produces ATP from ADP in the presence of a proton gradient across the membrane. The alpha chain is a regulatory subunit. The sequence is that of ATP synthase subunit alpha from Flavobacterium johnsoniae (strain ATCC 17061 / DSM 2064 / JCM 8514 / BCRC 14874 / CCUG 350202 / NBRC 14942 / NCIMB 11054 / UW101) (Cytophaga johnsonae).